The primary structure comprises 292 residues: High-affinity heme uptake system protein IsdE (292 aa).

Residues 1 to 19 form the signal peptide; the sequence is MRIIKYLTILVISVVILTS. Residue cysteine 20 is the site of N-palmitoyl cysteine attachment. Residue cysteine 20 is the site of S-diacylglycerol cysteine attachment. The region spanning 35–291 is the Fe/B12 periplasmic-binding domain; sequence RIVPTTVALT…QLYDLFYKDK (257 aa). The heme site is built by valine 41, alanine 42, serine 60, tyrosine 61, methionine 78, and histidine 229.

The protein belongs to the bacterial solute-binding protein 8 family. The cofactor is heme b.

The protein resides in the cell membrane. Functionally, involved in heme (porphyrin) scavenging. Binds Fe(2+) and Fe(3+) heme but the largest fraction is Fe(2+) heme. Functions as a high-affinity heme binding protein and probably has a role in relaying heme-iron from cell wall-anchored isd proteins receptors to the probable permease IsdF. The polypeptide is High-affinity heme uptake system protein IsdE (isdE) (Staphylococcus aureus (strain MRSA252)).